Reading from the N-terminus, the 285-residue chain is RNA exonuclease 4 (285 aa).

A compositionally biased stretch (polar residues) spans 1–14; that stretch reads MAKLSQNWKKLSSK. The segment at 1 to 35 is disordered; sequence MAKLSQNWKKLSSKIQDKPKNGSVKKPTLKGKISK. The Exonuclease domain occupies 116–267; the sequence is YVAIDCEFVG…EDARATMLLF (152 aa).

This sequence belongs to the REXO4 family.

The protein localises to the nucleus. In terms of biological role, exoribonuclease involved in ribosome biosynthesis. Involved in the processing of ITS1, the internal transcribed spacer localized between the 18S and 5.8S rRNAs. This Candida albicans (strain SC5314 / ATCC MYA-2876) (Yeast) protein is RNA exonuclease 4 (REX4).